The following is a 429-amino-acid chain: Adenylosuccinate synthetase (429 aa).

Residues 12–18 (GDEGKGK) and 40–42 (GHT) contribute to the GTP site. D13 serves as the catalytic Proton acceptor. D13 and G40 together coordinate Mg(2+). IMP-binding positions include 13 to 16 (DEGK), 38 to 41 (NAGH), T128, R142, Q223, T238, and R302. The Proton donor role is filled by H41. 298–304 (TTTGRPR) lines the substrate pocket. Residues R304, 330–332 (SID), and 412–414 (SVG) contribute to the GTP site.

Belongs to the adenylosuccinate synthetase family. As to quaternary structure, homodimer. Requires Mg(2+) as cofactor.

The protein localises to the cytoplasm. The catalysed reaction is IMP + L-aspartate + GTP = N(6)-(1,2-dicarboxyethyl)-AMP + GDP + phosphate + 2 H(+). Its pathway is purine metabolism; AMP biosynthesis via de novo pathway; AMP from IMP: step 1/2. Its function is as follows. Plays an important role in the de novo pathway of purine nucleotide biosynthesis. Catalyzes the first committed step in the biosynthesis of AMP from IMP. This Bacillus cytotoxicus (strain DSM 22905 / CIP 110041 / 391-98 / NVH 391-98) protein is Adenylosuccinate synthetase.